The primary structure comprises 478 residues: Aspartyl/glutamyl-tRNA(Asn/Gln) amidotransferase subunit B (478 aa).

Belongs to the GatB/GatE family. GatB subfamily. Heterotrimer of A, B and C subunits.

The catalysed reaction is L-glutamyl-tRNA(Gln) + L-glutamine + ATP + H2O = L-glutaminyl-tRNA(Gln) + L-glutamate + ADP + phosphate + H(+). The enzyme catalyses L-aspartyl-tRNA(Asn) + L-glutamine + ATP + H2O = L-asparaginyl-tRNA(Asn) + L-glutamate + ADP + phosphate + 2 H(+). Allows the formation of correctly charged Asn-tRNA(Asn) or Gln-tRNA(Gln) through the transamidation of misacylated Asp-tRNA(Asn) or Glu-tRNA(Gln) in organisms which lack either or both of asparaginyl-tRNA or glutaminyl-tRNA synthetases. The reaction takes place in the presence of glutamine and ATP through an activated phospho-Asp-tRNA(Asn) or phospho-Glu-tRNA(Gln). In Pseudothermotoga lettingae (strain ATCC BAA-301 / DSM 14385 / NBRC 107922 / TMO) (Thermotoga lettingae), this protein is Aspartyl/glutamyl-tRNA(Asn/Gln) amidotransferase subunit B.